A 60-amino-acid polypeptide reads, in one-letter code: Phospholipase A2 (60 aa).

Ca(2+) contacts are provided by Tyr-27, Gly-29, and Gly-31. A disulfide bond links Cys-28 and Cys-44. His-47 is a catalytic residue. Asp-48 serves as a coordination point for Ca(2+).

Ca(2+) serves as cofactor. As to expression, expressed by the venom gland.

Its subcellular location is the secreted. The enzyme catalyses a 1,2-diacyl-sn-glycero-3-phosphocholine + H2O = a 1-acyl-sn-glycero-3-phosphocholine + a fatty acid + H(+). In terms of biological role, snake venom phospholipase A2 (PLA2) that displays mild but significant inhibition of mouse platelet aggregation induced by ADP and collagen. In vivo, induces edema in the foot pads and gastrocnemius muscles of mice but shows no myonecrotic or myotoxic activity. PA2 catalyzes the calcium-dependent hydrolysis of the 2-acyl groups in 3-sn-phosphoglycerides. This is Phospholipase A2 from Lachesis muta rhombeata (Bushmaster).